Here is a 648-residue protein sequence, read N- to C-terminus: Dystrotelin (648 aa).

The ZZ-type zinc-finger motif lies at 223–279; it reads QHRVHCHACKAFPITGLRYRCLKCLNVHLCQSCFLTERRSRKHKPSHSVLEYCTQPS. Zn(2+) contacts are provided by cysteine 228, cysteine 231, cysteine 243, cysteine 246, cysteine 252, cysteine 255, histidine 265, and histidine 269. The stretch at 367–446 forms a coiled coil; it reads QRETAELQKD…LDTVRHLLSL (80 aa). Residues 455 to 474 are compositionally biased toward polar residues; it reads SHSNLQLEQDGSINENNWTQ. 2 disordered regions span residues 455–509 and 536–557; these read SHSN…DTLY and QREEEELQEEEEGLHEKEEGLP. Residues 479 to 502 are compositionally biased toward basic and acidic residues; the sequence is KPHESSSTEHEVEERGTRQERRFE. A compositionally biased stretch (acidic residues) spans 538–548; that stretch reads EEEELQEEEEG.

It is found in the cell membrane. This Danio rerio (Zebrafish) protein is Dystrotelin (dytn).